Consider the following 199-residue polypeptide: Protein GrpE (199 aa).

The disordered stretch occupies residues 20 to 52 (YKVENEILEEETDEESQHQEPALGHPSYTALEE).

This sequence belongs to the GrpE family. In terms of assembly, homodimer.

It localises to the cytoplasm. Its function is as follows. Participates actively in the response to hyperosmotic and heat shock by preventing the aggregation of stress-denatured proteins, in association with DnaK and GrpE. It is the nucleotide exchange factor for DnaK and may function as a thermosensor. Unfolded proteins bind initially to DnaJ; upon interaction with the DnaJ-bound protein, DnaK hydrolyzes its bound ATP, resulting in the formation of a stable complex. GrpE releases ADP from DnaK; ATP binding to DnaK triggers the release of the substrate protein, thus completing the reaction cycle. Several rounds of ATP-dependent interactions between DnaJ, DnaK and GrpE are required for fully efficient folding. This Legionella pneumophila (strain Corby) protein is Protein GrpE.